We begin with the raw amino-acid sequence, 547 residues long: Chaperonin GroEL (547 aa).

Residues 29-32, 86-90, glycine 413, and aspartate 498 each bind ATP; these read TLGP and DGTTT.

It belongs to the chaperonin (HSP60) family. In terms of assembly, forms a cylinder of 14 subunits composed of two heptameric rings stacked back-to-back. Interacts with the co-chaperonin GroES.

The protein resides in the cytoplasm. It carries out the reaction ATP + H2O + a folded polypeptide = ADP + phosphate + an unfolded polypeptide.. Its function is as follows. Together with its co-chaperonin GroES, plays an essential role in assisting protein folding. The GroEL-GroES system forms a nano-cage that allows encapsulation of the non-native substrate proteins and provides a physical environment optimized to promote and accelerate protein folding. In Herpetosiphon aurantiacus (strain ATCC 23779 / DSM 785 / 114-95), this protein is Chaperonin GroEL.